Here is a 341-residue protein sequence, read N- to C-terminus: Phosphate acyltransferase (341 aa).

This sequence belongs to the PlsX family. In terms of assembly, homodimer. Probably interacts with PlsY.

It localises to the cytoplasm. It catalyses the reaction a fatty acyl-[ACP] + phosphate = an acyl phosphate + holo-[ACP]. Its pathway is lipid metabolism; phospholipid metabolism. Its function is as follows. Catalyzes the reversible formation of acyl-phosphate (acyl-PO(4)) from acyl-[acyl-carrier-protein] (acyl-ACP). This enzyme utilizes acyl-ACP as fatty acyl donor, but not acyl-CoA. This Photobacterium profundum (strain SS9) protein is Phosphate acyltransferase.